The sequence spans 357 residues: Beta-hexosaminidase (357 aa).

Substrate contacts are provided by residues Asp-72, Arg-80, Arg-146, and 176–177 (KH). His-189 acts as the Proton donor/acceptor in catalysis. The active-site Nucleophile is Asp-260.

The protein belongs to the glycosyl hydrolase 3 family. NagZ subfamily.

The protein localises to the cytoplasm. It carries out the reaction Hydrolysis of terminal non-reducing N-acetyl-D-hexosamine residues in N-acetyl-beta-D-hexosaminides.. It participates in cell wall biogenesis; peptidoglycan recycling. Functionally, plays a role in peptidoglycan recycling by cleaving the terminal beta-1,4-linked N-acetylglucosamine (GlcNAc) from peptide-linked peptidoglycan fragments, giving rise to free GlcNAc, anhydro-N-acetylmuramic acid and anhydro-N-acetylmuramic acid-linked peptides. The chain is Beta-hexosaminidase from Hydrogenovibrio crunogenus (strain DSM 25203 / XCL-2) (Thiomicrospira crunogena).